Here is a 257-residue protein sequence, read N- to C-terminus: 1-(5-phosphoribosyl)-5-[(5-phosphoribosylamino)methylideneamino] imidazole-4-carboxamide isomerase (257 aa).

The Proton acceptor role is filled by D8. D130 serves as the catalytic Proton donor.

Belongs to the HisA/HisF family.

Its subcellular location is the cytoplasm. It carries out the reaction 1-(5-phospho-beta-D-ribosyl)-5-[(5-phospho-beta-D-ribosylamino)methylideneamino]imidazole-4-carboxamide = 5-[(5-phospho-1-deoxy-D-ribulos-1-ylimino)methylamino]-1-(5-phospho-beta-D-ribosyl)imidazole-4-carboxamide. It functions in the pathway amino-acid biosynthesis; L-histidine biosynthesis; L-histidine from 5-phospho-alpha-D-ribose 1-diphosphate: step 4/9. The polypeptide is 1-(5-phosphoribosyl)-5-[(5-phosphoribosylamino)methylideneamino] imidazole-4-carboxamide isomerase (Chlorobium chlorochromatii (strain CaD3)).